Consider the following 252-residue polypeptide: dITP/XTP pyrophosphatase (252 aa).

7–12 contacts substrate; it reads THNEGK. The active-site Proton acceptor is the Asp-74. Asp-74 is a Mg(2+) binding site. Substrate is bound by residues Ser-75 and 193–196; that span reads FGYD. Residues 202–229 form a disordered region; that stretch reads DDQPAGRVSTEPDHEGEPLTSAEMTPAE. Substrate contacts are provided by residues Lys-230 and 235–236; that span reads HR.

The protein belongs to the HAM1 NTPase family. As to quaternary structure, homodimer. It depends on Mg(2+) as a cofactor.

It catalyses the reaction XTP + H2O = XMP + diphosphate + H(+). The enzyme catalyses dITP + H2O = dIMP + diphosphate + H(+). The catalysed reaction is ITP + H2O = IMP + diphosphate + H(+). Functionally, pyrophosphatase that catalyzes the hydrolysis of nucleoside triphosphates to their monophosphate derivatives, with a high preference for the non-canonical purine nucleotides XTP (xanthosine triphosphate), dITP (deoxyinosine triphosphate) and ITP. Seems to function as a house-cleaning enzyme that removes non-canonical purine nucleotides from the nucleotide pool, thus preventing their incorporation into DNA/RNA and avoiding chromosomal lesions. The sequence is that of dITP/XTP pyrophosphatase from Bifidobacterium longum (strain NCC 2705).